Reading from the N-terminus, the 252-residue chain is MGGLPTLRIEPVPLERKVRPGDDLAELIAESAELEEGDVLAIAHTVVSKAEGALISLDEIEPSPFAKTLAERTGKDPRVVEVILREAESIVRVGPDFIITEVRGGMVCANAGVDESNAPPGYVIVLPEDPDRSARELRRRLRELVGVDVGVIITDTQGRPFREGVVGVAIGASGVPVLADRRGDRDLYGRELKITIVALGDLLASAAELVMGQADEGTPAVIFRGLKPELERFEGPRKARAIIRSPSRDIFR.

GTP-binding positions include 12–15, 44–45, and lysine 49; these read VPLE and HT. An a divalent metal cation-binding site is contributed by aspartate 114. Residue asparagine 117 participates in GTP binding. The a divalent metal cation site is built by aspartate 155, threonine 156, and glutamine 213. Residue 211-218 participates in GTP binding; the sequence is MGQADEGT.

Belongs to the CofE family. As to quaternary structure, homodimer. Requires Mg(2+) as cofactor. It depends on Mn(2+) as a cofactor. K(+) serves as cofactor.

It catalyses the reaction oxidized coenzyme F420-0 + GTP + L-glutamate = oxidized coenzyme F420-1 + GDP + phosphate + H(+). It carries out the reaction oxidized coenzyme F420-1 + GTP + L-glutamate = oxidized coenzyme F420-2 + GDP + phosphate + H(+). It participates in cofactor biosynthesis; coenzyme F420 biosynthesis. Its function is as follows. Catalyzes the GTP-dependent successive addition of two or more gamma-linked L-glutamates to the L-lactyl phosphodiester of 7,8-didemethyl-8-hydroxy-5-deazariboflavin (F420-0) to form coenzyme F420-0-glutamyl-glutamate (F420-2) or polyglutamated F420 derivatives. This is Coenzyme F420:L-glutamate ligase from Methanopyrus kandleri (strain AV19 / DSM 6324 / JCM 9639 / NBRC 100938).